Reading from the N-terminus, the 513-residue chain is Bifunctional pantoate ligase/cytidylate kinase (513 aa).

The pantoate--beta-alanine ligase stretch occupies residues 1 to 283; the sequence is MVQVFRTIAG…VGSTRLIDNL (283 aa). 30–37 is a binding site for ATP; that stretch reads MGSLHAGH. His-37 functions as the Proton donor in the catalytic mechanism. (R)-pantoate is bound at residue Gln-61. Beta-alanine is bound at residue Gln-61. 150–153 lines the ATP pocket; the sequence is GAKD. (R)-pantoate is bound at residue Gln-156. Residues Val-179 and 187 to 190 each bind ATP; that span reads MSSR. The tract at residues 284–513 is cytidylate kinase; the sequence is VLNHRLPIIA…IELYKKYNKG (230 aa).

The protein in the N-terminal section; belongs to the pantothenate synthetase family. This sequence in the C-terminal section; belongs to the cytidylate kinase family. Type 1 subfamily.

It is found in the cytoplasm. The catalysed reaction is (R)-pantoate + beta-alanine + ATP = (R)-pantothenate + AMP + diphosphate + H(+). The enzyme catalyses CMP + ATP = CDP + ADP. It carries out the reaction dCMP + ATP = dCDP + ADP. It participates in cofactor biosynthesis; (R)-pantothenate biosynthesis; (R)-pantothenate from (R)-pantoate and beta-alanine: step 1/1. In terms of biological role, catalyzes the condensation of pantoate with beta-alanine in an ATP-dependent reaction via a pantoyl-adenylate intermediate. Functionally, catalyzes the transfer of a phosphate group from ATP to either CMP or dCMP to form CDP or dCDP and ADP, respectively. This chain is Bifunctional pantoate ligase/cytidylate kinase, found in Synechocystis sp. (strain ATCC 27184 / PCC 6803 / Kazusa).